Here is a 198-residue protein sequence, read N- to C-terminus: MPLFGWMKWPKNDSYKPTHYPGSDIVTKTLLRELKWHLKERERLIQEIENEQKVKKTGVDYNWLRNYQNPHTTIPVTEQRQLEVLCSQVQPCQTGTILSRFREVLAENDVLPWEIVYIFKQVLKDFLSSSDRGSEQEDLEDSGSMDCSAPSVIQGDSSKRADKDEIPTISSYVDKNTKDRFPVFSHRIWNLPYYHPSS.

The stretch at 28 to 57 (KTLLRELKWHLKERERLIQEIENEQKVKKT) forms a coiled coil. The disordered stretch occupies residues 133–168 (GSEQEDLEDSGSMDCSAPSVIQGDSSKRADKDEIPT). Over residues 157 to 166 (SSKRADKDEI) the composition is skewed to basic and acidic residues.

In Homo sapiens (Human), this protein is Protein RD3-like (RD3L).